The chain runs to 174 residues: QQIGSEDGEPPQQRVTGTLVLAVFSAVLGSLQFGYNIGVINAPQKVIEQSYNETWLGRQGPNGPGSIPPGTLTTLWALSVAIFSVGGMFSSFLLGIISQWLGRKKAMLFNNTLAVLAGALMGLAKAAASYEMLILGRFLIGAYSGLASGLVPMYVGEIAPTHLRGALGTLNQLA.

The Cytoplasmic segment spans residues 1–19 (QQIGSEDGEPPQQRVTGTL). The interval 2–8 (QIGSEDG) is interaction with SRFBP1. Residue S5 is modified to Phosphoserine. A helical membrane pass occupies residues 20–40 (VLAVFSAVLGSLQFGYNIGVI). The Extracellular segment spans residues 41–76 (NAPQKVIEQSYNETWLGRQGPNGPGSIPPGTLTTLW). Residue N52 is glycosylated (N-linked (GlcNAc...) asparagine). Residues 77–97 (ALSVAIFSVGGMFSSFLLGII) form a helical membrane-spanning segment. The Cytoplasmic segment spans residues 98–114 (SQWLGRKKAMLFNNTLA). The chain crosses the membrane as a helical span at residues 115 to 135 (VLAGALMGLAKAAASYEMLIL). The Extracellular portion of the chain corresponds to 136-137 (GR). The helical transmembrane segment at 138 to 158 (FLIGAYSGLASGLVPMYVGEI) threads the bilayer. The Cytoplasmic segment spans residues 159–166 (APTHLRGA). The chain crosses the membrane as a helical span at residues 167–174 (LGTLNQLA).

This sequence belongs to the major facilitator superfamily. Sugar transporter (TC 2.A.1.1) family. Glucose transporter subfamily. Binds to DAXX. Interacts via its N-terminus with SRFBP1. Interacts with NDUFA9. Interacts with TRARG1; the interaction is required for proper SLC2A4 recycling after insulin stimulation. Sumoylated. Post-translationally, palmitoylated. Palmitoylation by ZDHHC7 controls the insulin-dependent translocation of GLUT4 to the plasma membrane.

It is found in the cell membrane. The protein resides in the endomembrane system. It localises to the cytoplasm. Its subcellular location is the perinuclear region. The catalysed reaction is D-glucose(out) = D-glucose(in). Functionally, insulin-regulated facilitative glucose transporter, which plays a key role in removal of glucose from circulation. Response to insulin is regulated by its intracellular localization: in the absence of insulin, it is efficiently retained intracellularly within storage compartments in muscle and fat cells. Upon insulin stimulation, translocates from these compartments to the cell surface where it transports glucose from the extracellular milieu into the cell. The sequence is that of Solute carrier family 2, facilitated glucose transporter member 4 from Sus scrofa (Pig).